Consider the following 381-residue polypeptide: Cytochrome b (381 aa).

The next 4 membrane-spanning stretches (helical) occupy residues 34–54 (FGSL…FLAM), 78–99 (WLIR…YFHI), 114–134 (WNIG…GYVL), and 179–199 (FFAF…IHVL). His84 and His98 together coordinate heme b. Heme b contacts are provided by His183 and His197. Residue His202 coordinates a ubiquinone. 4 consecutive transmembrane segments (helical) span residues 227–247 (YKDA…ALFL), 289–309 (LGGV…PFLH), 321–341 (LTQI…WIGG), and 348–368 (FILI…IALP).

The protein belongs to the cytochrome b family. As to quaternary structure, the cytochrome bc1 complex contains 3 respiratory subunits (MT-CYB, CYC1 and UQCRFS1), 2 core proteins (UQCRC1 and UQCRC2) and probably 6 low-molecular weight proteins. The cofactor is heme b.

It localises to the mitochondrion inner membrane. Component of the ubiquinol-cytochrome c reductase complex (complex III or cytochrome b-c1 complex) that is part of the mitochondrial respiratory chain. The b-c1 complex mediates electron transfer from ubiquinol to cytochrome c. Contributes to the generation of a proton gradient across the mitochondrial membrane that is then used for ATP synthesis. This chain is Cytochrome b (mt-cyb), found in Isurus oxyrinchus (Shortfin mako shark).